Reading from the N-terminus, the 92-residue chain is Small ribosomal subunit protein uS19c (92 aa).

This sequence belongs to the universal ribosomal protein uS19 family.

It is found in the plastid. Its subcellular location is the chloroplast. Protein S19 forms a complex with S13 that binds strongly to the 16S ribosomal RNA. The sequence is that of Small ribosomal subunit protein uS19c from Pinus koraiensis (Korean pine).